Consider the following 125-residue polypeptide: MARLAGVDIPNEKRIEIALTYIFGVGRTRAKETLAATGINPDIRVKDLTDEQLITLRDYLEGNYKIEGDLRREIDADIRRKIQINCYQGQRHRKGLPVRGQRTKTNARTRKGPKRTVAGKKKATK.

The interval glutamine 90–lysine 125 is disordered.

It belongs to the universal ribosomal protein uS13 family. Part of the 30S ribosomal subunit. Forms a loose heterodimer with protein S19. Forms two bridges to the 50S subunit in the 70S ribosome.

Functionally, located at the top of the head of the 30S subunit, it contacts several helices of the 16S rRNA. In the 70S ribosome it contacts the 23S rRNA (bridge B1a) and protein L5 of the 50S subunit (bridge B1b), connecting the 2 subunits; these bridges are implicated in subunit movement. Contacts the tRNAs in the A and P-sites. The chain is Small ribosomal subunit protein uS13 from Bifidobacterium adolescentis (strain ATCC 15703 / DSM 20083 / NCTC 11814 / E194a).